The primary structure comprises 350 residues: CMP-N-acetylneuraminate-beta-galactosamide-alpha-2,3-sialyltransferase 2 (350 aa).

The Cytoplasmic portion of the chain corresponds to 1–6 (MKCSLR). A helical; Signal-anchor for type II membrane protein transmembrane segment spans residues 7-27 (VWFLSMAFLLVFIMSLLFTYS). Over 28–350 (HHSMATLPYL…ASKIEVYRGN (323 aa)) the chain is Lumenal. Cystine bridges form between cysteine 70/cysteine 75, cysteine 72/cysteine 149, and cysteine 152/cysteine 291. 3 residues coordinate substrate: glutamine 116, asparagine 157, and asparagine 180. Asparagine 211 carries N-linked (GlcNAc...) asparagine glycosylation. 6 residues coordinate substrate: tyrosine 240, tyrosine 276, glycine 280, glycine 300, histidine 309, and histidine 326.

It belongs to the glycosyltransferase 29 family. In terms of assembly, homodimer; disulfide-linked. Homodimer formation occurs in the endoplasmic reticulum. The soluble form derives from the membrane form by proteolytic processing. In terms of processing, N-glycosylated; necessary for proper exit from endoplasmic reticulum and trafficking to the Golgi apparatus.

The protein resides in the golgi apparatus. Its subcellular location is the golgi stack membrane. The protein localises to the secreted. It catalyses the reaction a beta-D-galactosyl-(1-&gt;3)-N-acetyl-alpha-D-galactosaminyl derivative + CMP-N-acetyl-beta-neuraminate = an N-acetyl-alpha-neuraminyl-(2-&gt;3)-beta-D-galactosyl-(1-&gt;3)-N-acetyl-alpha-D-galactosaminyl derivative + CMP + H(+). It carries out the reaction a ganglioside GM1 (d18:1(4E)) + CMP-N-acetyl-beta-neuraminate = a ganglioside GD1a (d18:1(4E)) + CMP + H(+). The catalysed reaction is ganglioside GM1 (d18:1(4E)/18:0) + CMP-N-acetyl-beta-neuraminate = ganglioside GD1a (18:1(4E)/18:0) + CMP + H(+). The enzyme catalyses a ganglioside GA1 + CMP-N-acetyl-beta-neuraminate = a ganglioside GM1b + CMP + H(+). It catalyses the reaction a ganglioside GA1 (d18:1(4E)) + CMP-N-acetyl-beta-neuraminate = a ganglioside GM1b (d18:1(4E)) + CMP + H(+). It carries out the reaction a globoside GalGb4Cer + CMP-N-acetyl-beta-neuraminate = a globoside MSGG + CMP + H(+). It participates in protein modification; protein glycosylation. The protein operates within glycolipid biosynthesis. Its function is as follows. A beta-galactoside alpha2-3 sialyltransferase primarily involved in terminal sialylation of ganglio and globo series glycolipids. Catalyzes the transfer of sialic acid (N-acetyl-neuraminic acid; Neu5Ac) from the nucleotide sugar donor CMP-Neu5Ac onto acceptor Galbeta-(1-&gt;3)-GalNAc-terminated glycoconjugates through an alpha2-3 linkage. Sialylates GM1/GM1a, GA1/asialo-GM1 gangliosides to form GD1a and GM1b, respectively. Together with ST3GAL3, primarily responsible for biosynthesis of brain gangliosides that function as ligand for myelin-associated glycoprotein MAG on axons, regulating MAG expression and axonal myelin stability and regeneration. Responsible for the sialylation of the pluripotent stem cell- and cancer stem cell-associated antigen SSEA3, forming SSEA4. Sialylates with low efficiency asialofetuin, presumably onto O-glycosidically linked Galbeta-(1-&gt;3)-GalNAc-O-Ser. This chain is CMP-N-acetylneuraminate-beta-galactosamide-alpha-2,3-sialyltransferase 2 (St3gal2), found in Rattus norvegicus (Rat).